The primary structure comprises 584 residues: DNA ligase (584 aa).

Residue Glu249 coordinates ATP. The active-site N6-AMP-lysine intermediate is Lys251. Positions 256, 271, 301, 341, 416, and 422 each coordinate ATP.

Belongs to the ATP-dependent DNA ligase family. The cofactor is Mg(2+).

It catalyses the reaction ATP + (deoxyribonucleotide)n-3'-hydroxyl + 5'-phospho-(deoxyribonucleotide)m = (deoxyribonucleotide)n+m + AMP + diphosphate.. In terms of biological role, DNA ligase that seals nicks in double-stranded DNA during DNA replication, DNA recombination and DNA repair. The chain is DNA ligase from Pyrobaculum arsenaticum (strain DSM 13514 / JCM 11321 / PZ6).